The primary structure comprises 451 residues: Cobalamin reductase PduS (451 aa).

4Fe-4S ferredoxin-type domains follow at residues 255 to 284 (TVLS…HELS) and 300 to 330 (PQLL…MRIN). C264, C267, C270, C274, C309, C312, C315, and C320 together coordinate [4Fe-4S] cluster.

Belongs to the PduS cobalamin reductase family. As to quaternary structure, monomeric when purified anaerobically, dimeric under aerobic conditions. Forms a complex with PduO. Interacts with PduT, probably via the N-terminus of PduS. The cofactor is [4Fe-4S] cluster. Requires FMN as cofactor.

The protein resides in the bacterial microcompartment. Its pathway is polyol metabolism; 1,2-propanediol degradation. Its function is as follows. A protein that aids in conversion of cob(III)alamin to cob(II)alamin and then to cob(I)alamin in the bacterial microcompartment (BMC) dedicated to 1,2-propanediol (1,2-PD) degradation. The latter step requires PduO. No free cob(I)alamin is released, suggesting a complex is formed with PduO that finishes conversion to adenosylcobalamin. PduS and PduO allow regeneration of the adenosylcobalamin cofactor within the BMC. Another study showed reduction of cob(II)alamin to cob(I)alamin in the absence of PduO. Both reactions require NADH. Cyanocobalamin (CN-Cbl) is not a substrate for the first reaction. Cobalamin reduction probably occurs spontaneously in the presence of free reduced flavin nucleotides, this protein may be involved in electron transfer for this reduction. In terms of biological role, the 1,2-PD-specific bacterial microcompartment (BMC) concentrates low levels of 1,2-PD catabolic enzymes, concentrates volatile reaction intermediates thus enhancing pathway flux and keeps the level of toxic, mutagenic propionaldehyde low. This is Cobalamin reductase PduS from Salmonella typhimurium (strain LT2 / SGSC1412 / ATCC 700720).